The sequence spans 475 residues: NAD-dependent histone deacetylase sir2 (475 aa).

Polar residues predominate over residues 1–12 (MASNPLDNNMPT). The segment at 1 to 35 (MASNPLDNNMPTTPVEEKIPVASYSPSSSGSSSGA) is disordered. Positions 20–35 (PVASYSPSSSGSSSGA) are enriched in low complexity. Ser-55 carries the post-translational modification Phosphoserine. A Deacetylase sirtuin-type domain is found at 139–436 (KLPHFNTFED…AGWLNELQAL (298 aa)). NAD(+) contacts are provided by residues 164–183 (GAGI…NGFY) and 246–249 (QNID). His-266 serves as the catalytic Proton acceptor. Zn(2+) is bound by residues Cys-274, Cys-277, Cys-298, and Cys-301. NAD(+) is bound by residues 373-375 (GTS), 398-400 (SRT), and Cys-416.

It belongs to the sirtuin family. Class I subfamily. Requires Zn(2+) as cofactor.

Its subcellular location is the nucleus. The protein localises to the chromosome. It localises to the centromere. The protein resides in the telomere. The enzyme catalyses N(6)-acetyl-L-lysyl-[protein] + NAD(+) + H2O = 2''-O-acetyl-ADP-D-ribose + nicotinamide + L-lysyl-[protein]. In terms of biological role, involved in silencing within the mating-type region, at the telomeres, and according to PubMed:12867036 also within centromeric DNA regions. Required for the localization of swi6 to the telomeres, silent mating type region, and according to PubMed:12867036 to the centromeric DNA regions. According to PubMed:15545655 not required for the localization of swi6 to centromeric foci. Deacetylates histone H3 on 'Lys-9' and 'Lys-16' of histone H4. This has a direct role in heterochromatin assembly. The protein is NAD-dependent histone deacetylase sir2 (sir2) of Schizosaccharomyces pombe (strain 972 / ATCC 24843) (Fission yeast).